Here is a 206-residue protein sequence, read N- to C-terminus: Ribosomal RNA large subunit methyltransferase E (206 aa).

Residues Gly-60, Trp-62, Asp-80, Asp-96, and Asp-121 each coordinate S-adenosyl-L-methionine. The Proton acceptor role is filled by Lys-161.

This sequence belongs to the class I-like SAM-binding methyltransferase superfamily. RNA methyltransferase RlmE family.

Its subcellular location is the cytoplasm. It catalyses the reaction uridine(2552) in 23S rRNA + S-adenosyl-L-methionine = 2'-O-methyluridine(2552) in 23S rRNA + S-adenosyl-L-homocysteine + H(+). In terms of biological role, specifically methylates the uridine in position 2552 of 23S rRNA at the 2'-O position of the ribose in the fully assembled 50S ribosomal subunit. The sequence is that of Ribosomal RNA large subunit methyltransferase E from Saccharophagus degradans (strain 2-40 / ATCC 43961 / DSM 17024).